Here is a 147-residue protein sequence, read N- to C-terminus: Shadow of prion protein (147 aa).

Positions 1 to 24 (MNWTAATCWALLLAAAFLCDSCSA) are cleaved as a signal peptide. Residues 26 to 43 (GGRGGARGSARGVRGGAR) are compositionally biased toward gly residues. Positions 26–45 (GGRGGARGSARGVRGGARGA) are disordered. Residue Asn-107 is glycosylated (N-linked (GlcNAc...) asparagine). Residue Gly-122 is the site of GPI-anchor amidated glycine attachment. The propeptide at 123–147 (SGSVHSPRICLLLGGTLGALELLRP) is removed in mature form.

It belongs to the SPRN family. Post-translationally, N-glycosylated. As to expression, mainly expressed in brain (at protein level). In brain, it is highly expressed in the hippocampus and cerebellum and is also expressed at lower level in other areas of the brain including the cerebral cortex, the thalamus and the medulla. In hippocampus and cerebellum it is highly expressed in the cell bodies of pyramidal cells and Purkinje cells, respectively.

It is found in the cell membrane. Its function is as follows. Prion-like protein that has PrP(C)-like neuroprotective activity. May act as a modulator for the biological actions of normal and abnormal PrP. The sequence is that of Shadow of prion protein (Sprn) from Mus musculus (Mouse).